Consider the following 526-residue polypeptide: AAA ATPase forming ring-shaped complexes (526 aa).

The segment covering Met-1–Asp-18 has biased composition (polar residues). Residues Met-1 to Asn-20 are disordered. Residues Asn-20 to Leu-59 are a coiled coil. Residue Gly-257–Leu-262 participates in ATP binding.

This sequence belongs to the AAA ATPase family. As to quaternary structure, homohexamer. Assembles into a hexameric ring structure.

The chain is AAA ATPase forming ring-shaped complexes from Corynebacterium efficiens (strain DSM 44549 / YS-314 / AJ 12310 / JCM 11189 / NBRC 100395).